A 204-amino-acid polypeptide reads, in one-letter code: 8-oxoguanine DNA glycosylase/AP lyase (204 aa).

Residues lysine 128 and aspartate 146 contribute to the active site.

This sequence belongs to the type-2 OGG1 family.

It catalyses the reaction 2'-deoxyribonucleotide-(2'-deoxyribose 5'-phosphate)-2'-deoxyribonucleotide-DNA = a 3'-end 2'-deoxyribonucleotide-(2,3-dehydro-2,3-deoxyribose 5'-phosphate)-DNA + a 5'-end 5'-phospho-2'-deoxyribonucleoside-DNA + H(+). Catalyzes the excision of an oxidatively damaged form of guanine (7,8-dihydro-8-oxoguanine = 8-oxoG) from DNA. Also cleaves the DNA backbone at apurinic/apyrimidinic sites (AP sites). The protein is 8-oxoguanine DNA glycosylase/AP lyase of Sulfurisphaera tokodaii (strain DSM 16993 / JCM 10545 / NBRC 100140 / 7) (Sulfolobus tokodaii).